We begin with the raw amino-acid sequence, 255 residues long: UPF0246 protein DP0358 (255 aa).

It belongs to the UPF0246 family.

The polypeptide is UPF0246 protein DP0358 (Desulfotalea psychrophila (strain LSv54 / DSM 12343)).